The sequence spans 549 residues: Chaperonin GroEL (549 aa).

Residues 30–33 (TLGP), lysine 51, 87–91 (DGTTT), glycine 415, 479–481 (NAA), and aspartate 495 each bind ATP.

It belongs to the chaperonin (HSP60) family. Forms a cylinder of 14 subunits composed of two heptameric rings stacked back-to-back. Interacts with the co-chaperonin GroES.

The protein resides in the cytoplasm. The enzyme catalyses ATP + H2O + a folded polypeptide = ADP + phosphate + an unfolded polypeptide.. Its function is as follows. Together with its co-chaperonin GroES, plays an essential role in assisting protein folding. The GroEL-GroES system forms a nano-cage that allows encapsulation of the non-native substrate proteins and provides a physical environment optimized to promote and accelerate protein folding. This is Chaperonin GroEL from Leptothrix cholodnii (strain ATCC 51168 / LMG 8142 / SP-6) (Leptothrix discophora (strain SP-6)).